The sequence spans 363 residues: Peptide chain release factor 1 (363 aa).

Gln237 carries the N5-methylglutamine modification. The span at 284–296 (EDEKRRSAEESTR) shows a compositional bias: basic and acidic residues. The segment at 284–305 (EDEKRRSAEESTRRSLVASGDR) is disordered.

It belongs to the prokaryotic/mitochondrial release factor family. Post-translationally, methylated by PrmC. Methylation increases the termination efficiency of RF1.

It is found in the cytoplasm. Its function is as follows. Peptide chain release factor 1 directs the termination of translation in response to the peptide chain termination codons UAG and UAA. This chain is Peptide chain release factor 1, found in Shewanella baltica (strain OS195).